Here is a 237-residue protein sequence, read N- to C-terminus: 1-(5-phosphoribosyl)-5-[(5-phosphoribosylamino)methylideneamino] imidazole-4-carboxamide isomerase (237 aa).

The active-site Proton acceptor is D8. D129 serves as the catalytic Proton donor.

The protein belongs to the HisA/HisF family.

It is found in the cytoplasm. The catalysed reaction is 1-(5-phospho-beta-D-ribosyl)-5-[(5-phospho-beta-D-ribosylamino)methylideneamino]imidazole-4-carboxamide = 5-[(5-phospho-1-deoxy-D-ribulos-1-ylimino)methylamino]-1-(5-phospho-beta-D-ribosyl)imidazole-4-carboxamide. It functions in the pathway amino-acid biosynthesis; L-histidine biosynthesis; L-histidine from 5-phospho-alpha-D-ribose 1-diphosphate: step 4/9. The chain is 1-(5-phosphoribosyl)-5-[(5-phosphoribosylamino)methylideneamino] imidazole-4-carboxamide isomerase from Methanosphaera stadtmanae (strain ATCC 43021 / DSM 3091 / JCM 11832 / MCB-3).